A 358-amino-acid polypeptide reads, in one-letter code: DNA polymerase IV (358 aa).

Residues 4–185 (IIHVDMDCFY…LPLIKIPGVG (182 aa)) form the UmuC domain. Mg(2+) is bound by residues aspartate 8 and aspartate 103. Glutamate 104 is a catalytic residue.

This sequence belongs to the DNA polymerase type-Y family. As to quaternary structure, monomer. Mg(2+) is required as a cofactor.

The protein resides in the cytoplasm. The catalysed reaction is DNA(n) + a 2'-deoxyribonucleoside 5'-triphosphate = DNA(n+1) + diphosphate. Functionally, poorly processive, error-prone DNA polymerase involved in untargeted mutagenesis. Copies undamaged DNA at stalled replication forks, which arise in vivo from mismatched or misaligned primer ends. These misaligned primers can be extended by PolIV. Exhibits no 3'-5' exonuclease (proofreading) activity. May be involved in translesional synthesis, in conjunction with the beta clamp from PolIII. This Shewanella halifaxensis (strain HAW-EB4) protein is DNA polymerase IV.